A 276-amino-acid chain; its full sequence is Rhomboid-type serine protease 2 (276 aa).

5 helical membrane passes run 27 to 47 (LPLFTRATVLIIVLTWVLTLV), 77 to 97 (FPFIHLNIFHTILNIVAFTPL), 109 to 129 (TSVALFFGPFATIPGLIYVFV), 132 to 152 (FILHANTPVMGASMWVFLLLG), and 175 to 195 (WITPLLLVVVTAALLPSSSFL). S144 acts as the Nucleophile in catalysis. The active site involves H197. A helical membrane pass occupies residues 198–218 (LAGLLVGYGFGLGYLKFLAPP).

This sequence belongs to the peptidase S54 family.

It localises to the golgi apparatus membrane. Its subcellular location is the golgi apparatus. The protein localises to the cis-Golgi network membrane. The enzyme catalyses Cleaves type-1 transmembrane domains using a catalytic dyad composed of serine and histidine that are contributed by different transmembrane domains.. In terms of biological role, probable rhomboid-type serine protease that catalyzes intramembrane proteolysis. This is Rhomboid-type serine protease 2 (rbd-2) from Neurospora crassa (strain ATCC 24698 / 74-OR23-1A / CBS 708.71 / DSM 1257 / FGSC 987).